The following is an 898-amino-acid chain: Metalloprotease StcE (898 aa).

The signal sequence occupies residues 1–35 (MNTKMNERWRTPMKLKYLSCTILAPLAIGVFSATA). Positions 296–551 (ELLLHTIDIG…QRFFENKAVF (256 aa)) constitute a Peptidase M66 domain. His446 contributes to the Zn(2+) binding site. Glu447 is an active-site residue. Zn(2+) contacts are provided by His450 and His456.

Zn(2+) serves as cofactor.

Its subcellular location is the secreted. Inhibited by divalent cation chelators such as BPS and EDTA. Virulence factor that contributes to intimate adherence of enterohemorrhagic E.coli (EHEC) O157:H7 to host cells. Is able to cleave the secreted human mucin 7 (MUC7) and the glycoprotein 340 (DMBT1/GP340). Also cleaves human C1 inhibitor (SERPING1), a regulator of multiple inflammatory pathways, and binds and localizes it to bacterial and host cell surfaces, protecting them from complement-mediated lysis. Therefore, the current model proposes two roles for StcE during infection: it acts first as a mucinase, allowing passage of EHEC through the oral cavity by cleaving the salivary glycoproteins that are responsible for bacterial aggregation. Similarly, in the colon, StcE cleaves the glycoproteins that protect the intestinal epithelial surface, allowing EHEC to come into close contact with host cell membranes. Secondly, it acts as an anti-inflammatory agent by localizing SERPING1 to cell membranes. The polypeptide is Metalloprotease StcE (stcE) (Escherichia coli O157:H7).